The chain runs to 173 residues: Dual-action ribosomal maturation protein DarP (173 aa).

The protein belongs to the DarP family.

It is found in the cytoplasm. Functionally, member of a network of 50S ribosomal subunit biogenesis factors which assembles along the 30S-50S interface, preventing incorrect 23S rRNA structures from forming. Promotes peptidyl transferase center (PTC) maturation. The protein is Dual-action ribosomal maturation protein DarP of Pseudomonas putida (strain ATCC 700007 / DSM 6899 / JCM 31910 / BCRC 17059 / LMG 24140 / F1).